The chain runs to 406 residues: Succinylornithine transaminase (406 aa).

Residue lysine 252 is modified to N6-(pyridoxal phosphate)lysine.

Belongs to the class-III pyridoxal-phosphate-dependent aminotransferase family. AstC subfamily. Pyridoxal 5'-phosphate is required as a cofactor.

It carries out the reaction N(2)-succinyl-L-ornithine + 2-oxoglutarate = N-succinyl-L-glutamate 5-semialdehyde + L-glutamate. It functions in the pathway amino-acid degradation; L-arginine degradation via AST pathway; L-glutamate and succinate from L-arginine: step 3/5. Functionally, catalyzes the transamination of N(2)-succinylornithine and alpha-ketoglutarate into N(2)-succinylglutamate semialdehyde and glutamate. Can also act as an acetylornithine aminotransferase. This is Succinylornithine transaminase from Shigella boydii serotype 18 (strain CDC 3083-94 / BS512).